The sequence spans 395 residues: S-adenosylmethionine synthase (395 aa).

Position 14 (histidine 14) interacts with ATP. Aspartate 16 contacts Mg(2+). Residue glutamate 42 coordinates K(+). Residues glutamate 55 and glutamine 98 each contribute to the L-methionine site. Residues 98–108 (QSPDIALGVDK) are flexible loop. ATP contacts are provided by residues 175–177 (DGK), 242–243 (RF), aspartate 251, 257–258 (RK), alanine 274, and lysine 278. Residue aspartate 251 participates in L-methionine binding. Lysine 282 is a binding site for L-methionine.

Belongs to the AdoMet synthase family. In terms of assembly, homotetramer; dimer of dimers. It depends on Mg(2+) as a cofactor. Requires K(+) as cofactor.

Its subcellular location is the cytoplasm. The catalysed reaction is L-methionine + ATP + H2O = S-adenosyl-L-methionine + phosphate + diphosphate. It functions in the pathway amino-acid biosynthesis; S-adenosyl-L-methionine biosynthesis; S-adenosyl-L-methionine from L-methionine: step 1/1. Functionally, catalyzes the formation of S-adenosylmethionine (AdoMet) from methionine and ATP. The overall synthetic reaction is composed of two sequential steps, AdoMet formation and the subsequent tripolyphosphate hydrolysis which occurs prior to release of AdoMet from the enzyme. The chain is S-adenosylmethionine synthase from Thermosipho africanus (strain TCF52B).